The following is an 870-amino-acid chain: NEDD4-like E3 ubiquitin-protein ligase WWP2 (870 aa).

In terms of domain architecture, C2 spans 1-117 (MASASSSRAG…KNNGGKMENM (117 aa)). The tract at residues 151–299 (VPNGSALTDG…QQLPAAAQAP (149 aa)) is disordered. Polar residues-rich tracts occupy residues 152–171 (PNGS…SSGT) and 200–210 (SARTTPATGEQ). Serine 211 carries the post-translational modification Phosphoserine. 2 stretches are compositionally biased toward polar residues: residues 222 to 243 (VKNS…TTAT) and 263 to 272 (VTPNPNTTSL). The span at 290–299 (QQLPAAAQAP) shows a compositional bias: low complexity. 4 WW domains span residues 300-333 (DALP…RPLP), 330-363 (RPLP…RPTA), 405-437 (GPLP…DPRT), and 444-477 (PALP…DPRP). Residues 536–870 (KPYDLRRRLY…IEETEGFGQE (335 aa)) form the HECT domain. Residue cysteine 838 is the Glycyl thioester intermediate of the active site.

Interacts with POU5F1, RBP1, EGR2 and SLC11A2. Interacts with SCNN1A, SCNN1B, SCNN1G, WBP1, WBP2 and ATN1. Interacts with ERBB4, NDFIP1 and NDFIP2. Interacts with ARRDC4. Interacts (via WW domains) with ARRDC1 (via PPxY motifs); ubiquitinates ARRDC1. Interacts (via WW domains) with ARRDC2 and ARRDC3. As to quaternary structure, (Microbial infection) Interacts with adenovirus type 2 PIII. Post-translationally, autoubiquitinated. Ubiquitinated by the SCF(FBXL15) complex, leading to its degradation by the proteasome. In terms of tissue distribution, detected in heart, throughout the brain, placenta, lung, liver, muscle, kidney and pancreas. Also detected in spleen and peripheral blood leukocytes.

It localises to the nucleus. It catalyses the reaction S-ubiquitinyl-[E2 ubiquitin-conjugating enzyme]-L-cysteine + [acceptor protein]-L-lysine = [E2 ubiquitin-conjugating enzyme]-L-cysteine + N(6)-ubiquitinyl-[acceptor protein]-L-lysine.. The protein operates within protein modification; protein ubiquitination. With respect to regulation, activated by NDFIP1- and NDFIP2-binding. E3 ubiquitin-protein ligase which accepts ubiquitin from an E2 ubiquitin-conjugating enzyme in the form of a thioester and then directly transfers the ubiquitin to targeted substrates. Polyubiquitinates POU5F1 by 'Lys-63'-linked conjugation and promotes it to proteasomal degradation; in embryonic stem cells (ESCs) the ubiquitination is proposed to regulate POU5F1 protein level. Ubiquitinates EGR2 and promotes it to proteasomal degradation; in T-cells the ubiquitination inhibits activation-induced cell death. Ubiquitinates SLC11A2; the ubiquitination is enhanced by presence of NDFIP1 and NDFIP2. Ubiquitinates RPB1 and promotes it to proteasomal degradation. The sequence is that of NEDD4-like E3 ubiquitin-protein ligase WWP2 (WWP2) from Homo sapiens (Human).